A 1395-amino-acid chain; its full sequence is G-protein coupled receptor-associated sorting protein 1 (1395 aa).

Disordered regions lie at residues 1–25 (MTGA…VVGG), 45–83 (QIMP…AKAI), and 269–288 (TNTW…FRSK). A compositionally biased stretch (basic and acidic residues) spans 269 to 281 (TNTWSGPREDPNS). Residue Ser297 is modified to Phosphoserine. A disordered region spans residues 446-469 (SMGTGASSKSRPRTDGERIGDSLF). The segment covering 457-469 (PRTDGERIGDSLF) has biased composition (basic and acidic residues). Ser631 and Ser899 each carry phosphoserine. Residues 899-1395 (SETEEETIFG…QNDPEGDQEN (497 aa)) are OPRD1-binding.

It belongs to the GPRASP family. As to quaternary structure, interacts with cytoplasmic tails of a variety of G-protein coupled receptors such as D2 dopamine receptor/DRD2, delta opioid receptor/OPRD1, beta-2 adrenergic receptor/ADRB2 and D4 dopamine receptor/DRD4. Interacts with PER1. Interacts with BECN2; the interaction is direct. In terms of tissue distribution, expressed in the brain, with lower expression in medulla, spinal cord and substantia nigra.

The protein resides in the cytoplasm. In terms of biological role, modulates lysosomal sorting and functional down-regulation of a variety of G-protein coupled receptors. Targets receptors for degradation in lysosomes via its interaction with BECN2. This Homo sapiens (Human) protein is G-protein coupled receptor-associated sorting protein 1 (GPRASP1).